The chain runs to 635 residues: Surface protein F (635 aa).

The first 37 residues, 1–37 (MAKYRGKPFQLYVKLSCSTMMATSIILTNILPYDAQA), serve as a signal peptide directing secretion. Basic and acidic residues-rich tracts occupy residues 101 to 112 (NELDSKDNKSSH) and 193 to 202 (KSKDASKDTS). 2 disordered regions span residues 101–122 (NELD…SDID) and 192–228 (HKSK…SGHV). An LPXTG sorting signal motif is present at residues 597 to 601 (LPKAG). The residue at position 600 (alanine 600) is a Pentaglycyl murein peptidoglycan amidated alanine. A propeptide spans 601 to 635 (GETIKEHWLPISVIVGAMGVLMIWLSRRNKLKNKA) (removed by sortase).

It is found in the secreted. The protein localises to the cell wall. This is Surface protein F from Staphylococcus aureus (strain NCTC 8325 / PS 47).